The chain runs to 70 residues: Small ribosomal subunit protein bS21 (70 aa).

It belongs to the bacterial ribosomal protein bS21 family.

The sequence is that of Small ribosomal subunit protein bS21 from Methylobacillus flagellatus (strain ATCC 51484 / DSM 6875 / VKM B-1610 / KT).